The primary structure comprises 255 residues: Protein 2b (255 aa).

This sequence belongs to the tobravirus protein 2b family.

The protein localises to the virion. In terms of biological role, may function by interacting with a small, flexible domain located at the C-terminus of the CP, forming a bridge between the virus particle and the internal surface of the vector nematode feeding apparatus. The protein is Protein 2b of Tobacco rattle virus (strain TCM).